The primary structure comprises 273 residues: Large ribosomal subunit protein uL2cz/uL2cy (273 aa).

Disordered regions lie at residues 1–23 (MAIHLYKTSTPSTRNGAVDSQVK) and 224–273 (NPVD…RRRK).

This sequence belongs to the universal ribosomal protein uL2 family. Part of the 50S ribosomal subunit.

The protein localises to the plastid. The protein resides in the chloroplast. The sequence is that of Large ribosomal subunit protein uL2cz/uL2cy (rpl2-A) from Amborella trichopoda.